A 289-amino-acid chain; its full sequence is Protease HtpX homolog (289 aa).

Helical transmembrane passes span 7–26 and 31–48; these read TAALLAALSGLLIAISYWVI and GLIIGIGLAAVTNLFSWY. Residue histidine 132 coordinates Zn(2+). Glutamate 133 is an active-site residue. A Zn(2+)-binding site is contributed by histidine 136. The next 2 helical transmembrane spans lie at 151–171 and 182–202; these read VAGAISFLAQMVSYSLWFGGG and LGVLLTVMLAPLAATIIQLAI. Glutamate 207 contacts Zn(2+).

This sequence belongs to the peptidase M48B family. Requires Zn(2+) as cofactor.

The protein resides in the cell inner membrane. The sequence is that of Protease HtpX homolog from Nostoc punctiforme (strain ATCC 29133 / PCC 73102).